A 541-amino-acid polypeptide reads, in one-letter code: T-complex protein 1 subunit epsilon (541 aa).

Ala2 carries the N-acetylalanine modification. Residue Lys20 forms a Glycyl lysine isopeptide (Lys-Gly) (interchain with G-Cter in SUMO2) linkage. Ser26 is modified (phosphoserine). Gly53 contacts ADP. An ATP-binding site is contributed by Gly53. Asp104 provides a ligand contact to Mg(2+). Residues Gly105, Thr106, Thr107, and Ser175 each coordinate ADP. Residues Thr106 and Thr107 each contribute to the ATP site. Residues Lys210, Lys214, Lys265, Lys275, and Lys279 each participate in a glycyl lysine isopeptide (Lys-Gly) (interchain with G-Cter in SUMO2) cross-link. Ser346 carries the post-translational modification Phosphoserine. Lys392 is covalently cross-linked (Glycyl lysine isopeptide (Lys-Gly) (interchain with G-Cter in SUMO2)). Positions 422, 492, 508, and 513 each coordinate ADP. Residue Gly422 coordinates ATP. The residue at position 539 (Ser539) is a Phosphoserine.

It belongs to the TCP-1 chaperonin family. As to quaternary structure, component of the chaperonin-containing T-complex (TRiC), a hexadecamer composed of two identical back-to-back stacked rings enclosing a protein folding chamber. Each ring is made up of eight different subunits: TCP1/CCT1, CCT2, CCT3, CCT4, CCT5, CCT6A/CCT6, CCT7, CCT8. Interacts with PACRG. Interacts with DNAAF4. Interacts with DLEC1. Interacts with SPMAP2. Post-translationally, ubiquitinated by the DCX(DCAF12) complex specifically recognizes the diglutamate (Glu-Glu) at the C-terminus, leading to its degradation.

Its subcellular location is the cytoplasm. The protein localises to the cytoskeleton. The protein resides in the microtubule organizing center. It is found in the centrosome. It catalyses the reaction ATP + H2O = ADP + phosphate + H(+). Functionally, component of the chaperonin-containing T-complex (TRiC), a molecular chaperone complex that assists the folding of actin, tubulin and other proteins upon ATP hydrolysis. The TRiC complex mediates the folding of WRAP53/TCAB1, thereby regulating telomere maintenance. As part of the TRiC complex may play a role in the assembly of BBSome, a complex involved in ciliogenesis regulating transports vesicles to the cilia. The protein is T-complex protein 1 subunit epsilon (Cct5) of Rattus norvegicus (Rat).